Here is a 384-residue protein sequence, read N- to C-terminus: 8-amino-7-oxononanoate synthase (384 aa).

Arginine 21 is a substrate binding site. 108 to 109 (GF) provides a ligand contact to pyridoxal 5'-phosphate. Histidine 133 is a substrate binding site. Residues serine 179, histidine 207, and threonine 233 each contribute to the pyridoxal 5'-phosphate site. Position 236 is an N6-(pyridoxal phosphate)lysine (lysine 236). Threonine 352 contacts substrate.

Belongs to the class-II pyridoxal-phosphate-dependent aminotransferase family. BioF subfamily. Homodimer. Pyridoxal 5'-phosphate serves as cofactor.

The enzyme catalyses 6-carboxyhexanoyl-[ACP] + L-alanine + H(+) = (8S)-8-amino-7-oxononanoate + holo-[ACP] + CO2. It participates in cofactor biosynthesis; biotin biosynthesis. Catalyzes the decarboxylative condensation of pimeloyl-[acyl-carrier protein] and L-alanine to produce 8-amino-7-oxononanoate (AON), [acyl-carrier protein], and carbon dioxide. The chain is 8-amino-7-oxononanoate synthase from Escherichia coli O6:H1 (strain CFT073 / ATCC 700928 / UPEC).